The following is a 356-amino-acid chain: MTWRKIIHIDMDAFYASVEQRDDPSLRGQPVVVGGSPEGRGVVAAASYEARAFGIRSAQPAAWARRRCPEAIFLRPRFDRYRAISRQIHGIFADFATTIEPLSLDEAYLDVTGSQRFRGSATHMAQAIRRRIREETGLTASAGVSYNKLLAKLASDEGKPDGLYVVPPEDGPAYVAAQPIRRLHGVGPATAARLERLGIRQVGDLLDWELADLHVFLGNRAGTLHDAARGIDHRPVRPRRSRKSIGAERTFGDDTRDLGEIHQRLAPLITKVATRLEHHELVARTVTLKLRYADFESITRRVSPPGPVAQAADIEALIPALLAETEAGSRPVRLLGVSLSGLQPKQREQDLFSALT.

The UmuC domain maps to 6–187 (IIHIDMDAFY…QPIRRLHGVG (182 aa)). Mg(2+)-binding residues include aspartate 10 and aspartate 105. The active site involves glutamate 106.

It belongs to the DNA polymerase type-Y family. Monomer. Mg(2+) serves as cofactor.

The protein localises to the cytoplasm. The catalysed reaction is DNA(n) + a 2'-deoxyribonucleoside 5'-triphosphate = DNA(n+1) + diphosphate. Functionally, poorly processive, error-prone DNA polymerase involved in untargeted mutagenesis. Copies undamaged DNA at stalled replication forks, which arise in vivo from mismatched or misaligned primer ends. These misaligned primers can be extended by PolIV. Exhibits no 3'-5' exonuclease (proofreading) activity. May be involved in translesional synthesis, in conjunction with the beta clamp from PolIII. The protein is DNA polymerase IV of Halorhodospira halophila (strain DSM 244 / SL1) (Ectothiorhodospira halophila (strain DSM 244 / SL1)).